The chain runs to 3473 residues: Genome polyprotein (3473 aa).

Positions 514–604 form a coiled coil; that stretch reads EVQDALEKSM…RNDIEALKKK (91 aa). 2 disordered regions span residues 602–644 and 1278–1306; these read KKKP…SEAQ and YLADEQPTTSAPRTSIVNTEDDPPTEGEI. Polar residues-rich tracts occupy residues 607–622 and 1278–1295; these read QSVTPLPSPSGNSGTA and YLADEQPTTSAPRTSIVN. A run of 2 helical transmembrane segments spans residues 1496–1516 and 1595–1615; these read DKWIWAALASILVGAALLHYY and MSSLLTILSVVASLVMWGKIP. The SF3 helicase domain occupies 1751–1917; sequence LELMNESYTY…PDVPKNEANP (167 aa). Residue 1777–1784 coordinates ATP; sequence GAPGVGKS. Residues 2363 to 2383 form a helical membrane-spanning segment; that stretch reads ILLAIGASVAVAGVAVGAVIL. Over residues 2394-2404 the composition is skewed to acidic residues; it reads EDEEIEGEEGE. Disordered stretches follow at residues 2394–2415 and 2438–2465; these read EDEEIEGEEGETQASGAHESDG and VAEAHEEKDAEKPRKSGNPTRKSYLGLS. Over residues 2438-2451 the composition is skewed to basic and acidic residues; it reads VAEAHEEKDAEKPR. Positions 2632–2850 constitute a Peptidase C3 domain; the sequence is GVDRDLSMTN…YAETLTQEHL (219 aa). Active-site for picornain 3C-like protease activity residues include H2680, E2717, and C2811. A RdRp catalytic domain is found at 3155–3286; sequence TKGFAGDYSK…SVHEEFLDVY (132 aa).

Specific enzymatic cleavages by picornain 3C-like protease in vivo yield mature proteins. Picornain 3C-like protease is autocatalytically processed.

The protein localises to the virion. It is found in the host membrane. It carries out the reaction RNA(n) + a ribonucleoside 5'-triphosphate = RNA(n+1) + diphosphate. Functionally, picornain 3C-like protease is a thiol protease that probably cleaves the polyprotein. The sequence is that of Genome polyprotein from Oryza sativa (Rice).